The chain runs to 394 residues: Putative fimbrial assembly protein FimD, serogroup D (394 aa).

In Dichelobacter nodosus (Bacteroides nodosus), this protein is Putative fimbrial assembly protein FimD, serogroup D (fimD).